Consider the following 357-residue polypeptide: Homeobox protein HMX3 (357 aa).

Disordered stretches follow at residues 1–58 (MPEP…LFAP) and 129–229 (LPRP…RKKK). The span at 16–27 (PQPPPPPPPAPK) shows a compositional bias: pro residues. Composition is skewed to basic and acidic residues over residues 130–140 (PRPEASEKALL) and 149–173 (TDRD…KSPD). Phosphoserine occurs at positions 153 and 180. Over residues 191–209 (AAPGAAGASVGAAAATPGA) the composition is skewed to low complexity. Basic and acidic residues predominate over residues 210–223 (EDWKKGAESPEKKP). The homeobox DNA-binding region spans 227-286 (KKKTRTVFSRSQVFQLESTFDMKRYLSSSERAGLAASLHLTETQVKIWFQNRRNKWKRQL).

The protein belongs to the HMX homeobox family.

The protein resides in the nucleus. Transcription factor involved in specification of neuronal cell types and which is required for inner ear and hypothalamus development. Binds to the 5'-CAAGTG-3' core sequence. Controls semicircular canal formation in the inner ear. Also required for hypothalamic/pituitary axis of the CNS. This chain is Homeobox protein HMX3 (HMX3), found in Homo sapiens (Human).